Reading from the N-terminus, the 152-residue chain is Protein SprT-like (152 aa).

One can recognise a SprT-like domain in the interval 7 to 148 (QRLVEEVSLQ…GKCKGKLILI (142 aa)). Residue His67 coordinates Zn(2+). Glu68 is a catalytic residue. Zn(2+) is bound at residue His71.

It belongs to the SprT family. The cofactor is Zn(2+).

The protein resides in the cytoplasm. The sequence is that of Protein SprT-like from Bacillus cereus (strain AH187).